A 90-amino-acid chain; its full sequence is ATP synthase subunit c (90 aa).

Transmembrane regions (helical) follow at residues 17 to 37 and 70 to 90; these read PLAY…AGVV and LAIV…IIFV.

This sequence belongs to the ATPase C chain family. As to quaternary structure, F-type ATPases have 2 components, F(1) - the catalytic core - and F(0) - the membrane proton channel. F(1) has five subunits: alpha(3), beta(3), gamma(1), delta(1), epsilon(1). F(0) has three main subunits: a(1), b(2) and c(10-14). The alpha and beta chains form an alternating ring which encloses part of the gamma chain. F(1) is attached to F(0) by a central stalk formed by the gamma and epsilon chains, while a peripheral stalk is formed by the delta and b chains.

It localises to the cell membrane. Its function is as follows. F(1)F(0) ATP synthase produces ATP from ADP in the presence of a proton or sodium gradient. F-type ATPases consist of two structural domains, F(1) containing the extramembraneous catalytic core and F(0) containing the membrane proton channel, linked together by a central stalk and a peripheral stalk. During catalysis, ATP synthesis in the catalytic domain of F(1) is coupled via a rotary mechanism of the central stalk subunits to proton translocation. In terms of biological role, key component of the F(0) channel; it plays a direct role in translocation across the membrane. A homomeric c-ring of between 10-14 subunits forms the central stalk rotor element with the F(1) delta and epsilon subunits. The protein is ATP synthase subunit c of Metamycoplasma arthritidis (strain 158L3-1) (Mycoplasma arthritidis).